The sequence spans 599 residues: Aspartate--tRNA(Asp/Asn) ligase (599 aa).

Glutamate 180 contributes to the L-aspartate binding site. Positions 204 to 207 (QLLK) are aspartate. Arginine 226 lines the L-aspartate pocket. ATP is bound by residues 226 to 228 (RDE) and glutamine 235. Histidine 457 is a binding site for L-aspartate. Glutamate 491 serves as a coordination point for ATP. Arginine 498 is a binding site for L-aspartate. 543–546 (GWDR) is an ATP binding site. The segment at 565–599 (KAGGGRDPLTGAPAPISDEQRAETGVDYDPDADEN) is disordered. Positions 590–599 (VDYDPDADEN) are enriched in acidic residues.

Belongs to the class-II aminoacyl-tRNA synthetase family. Type 1 subfamily. Homodimer.

The protein localises to the cytoplasm. The enzyme catalyses tRNA(Asx) + L-aspartate + ATP = L-aspartyl-tRNA(Asx) + AMP + diphosphate. In terms of biological role, aspartyl-tRNA synthetase with relaxed tRNA specificity since it is able to aspartylate not only its cognate tRNA(Asp) but also tRNA(Asn). Reaction proceeds in two steps: L-aspartate is first activated by ATP to form Asp-AMP and then transferred to the acceptor end of tRNA(Asp/Asn). The chain is Aspartate--tRNA(Asp/Asn) ligase from Bifidobacterium longum (strain DJO10A).